Here is a 211-residue protein sequence, read N- to C-terminus: Mediator-associated protein 2 (211 aa).

The disordered stretch occupies residues 128–211; the sequence is QQKLVGSVTN…KSKKKVKKEE (84 aa). Positions 134-148 are enriched in low complexity; the sequence is SVTNSSKKSSNLTQS. Position 173 is a phosphoserine (serine 173). Low complexity predominate over residues 189–198; sequence STSTVSGSSE. Residues 202 to 211 show a composition bias toward basic residues; sequence KSKKKVKKEE.

As to quaternary structure, associated with the Mediator complex.

Its subcellular location is the nucleus. The protein is Mediator-associated protein 2 of Arabidopsis thaliana (Mouse-ear cress).